A 798-amino-acid chain; its full sequence is Bromodomain-containing protein 2 (798 aa).

Position 1 is an N-acetylmethionine (methionine 1). Residues 1-21 (MLQNVTPHKLPGEGNAGLLGL) are disordered. Threonine 6 carries the phosphothreonine modification. Serine 36 bears the Phosphoserine mark. The segment at 53-72 (LQLAPANPPPPEVSNPKKPG) is disordered. Residues 73–179 (RVTNQLQYLH…KIFLQKVASM (107 aa)) form the Bromo 1 domain. Residues aspartate 111, tyrosine 154, asparagine 155, lysine 156, aspartate 159, and aspartate 160 each contribute to the a protein site. Disordered regions lie at residues 267 to 348 (PPAQ…LSEQ), 454 to 645 (DEPL…YDEK), and 736 to 798 (KRLQ…SDSG). The span at 284 to 297 (TTTPTPTAILAPGS) shows a compositional bias: low complexity. A phosphoserine mark is found at serine 297, serine 300, and serine 304. Residues 315–331 (MRRESGRPIKPPRKDLP) show a composition bias toward basic and acidic residues. The 110-residue stretch at 343–452 (GKLSEQLKHC…DVFEFRYAKM (110 aa)) folds into the Bromo 2 domain. Residues 480–512 (SSEESSSESSSEEEEEEEEDEDEEESESSDSEE) are compositionally biased toward acidic residues. The segment covering 542 to 564 (KPKRKREKKEKKKKRKAEKHRGR) has biased composition (basic residues). Residues 553–557 (KKKRK) carry the Nuclear localization signal motif. An NET domain is found at 630–712 (DSEEEEESRP…SCLRKKPRKP (83 aa)). Serine 631 bears the Phosphoserine mark. Residues 772-792 (SASSSSSDSSSSSSSSSSSDT) are compositionally biased toward low complexity.

It belongs to the BET family. In terms of assembly, homodimer. Interacts with E2F1. Interacts with (acetylated) STAT3; promoting STAT3 recruitment to chromatin. Interacts with CTCF; promoting BRD2 recruitment to chromatin. Predominantly expressed in the testis, followed by ovary, placenta, embryo and to a lower extent in somatic tissues.

Its subcellular location is the nucleus. The protein resides in the chromosome. In terms of biological role, chromatin reader protein that specifically recognizes and binds histone H4 acetylated at 'Lys-5' and 'Lys-12' (H4K5ac and H4K12ac, respectively), thereby controlling gene expression and remodeling chromatin structures. Recruits transcription factors and coactivators to target gene sites, and activates RNA polymerase II machinery for transcriptional elongation. Plays a key role in genome compartmentalization via its association with CTCF and cohesin: recruited to chromatin by CTCF and promotes formation of topologically associating domains (TADs) via its ability to bind acetylated histones, contributing to CTCF boundary formation and enhancer insulation. Also recognizes and binds acetylated non-histone proteins, such as STAT3. Involved in inflammatory response by regulating differentiation of naive CD4(+) T-cells into T-helper Th17: recognizes and binds STAT3 acetylated at 'Lys-87', promoting STAT3 recruitment to chromatin. In addition to acetylated lysines, also recognizes and binds lysine residues on histones that are both methylated and acetylated on the same side chain to form N6-acetyl-N6-methyllysine (Kacme), an epigenetic mark of active chromatin associated with increased transcriptional initiation. Specifically binds histone H4 acetyl-methylated at 'Lys-5' and 'Lys-12' (H4K5acme and H4K12acme, respectively). The polypeptide is Bromodomain-containing protein 2 (Mus musculus (Mouse)).